Consider the following 156-residue polypeptide: Snaclec A1 (156 aa).

The signal sequence occupies residues 1–23 (MGRSISVSFGLLVVFLSLSGTGA). Disulfide bonds link Cys27-Cys38, Cys55-Cys154, and Cys129-Cys146. In terms of domain architecture, C-type lectin spans 34–155 (HEGHCYKVFN…CGQPYRFTCE (122 aa)).

It belongs to the snaclec family. Heterodimer; disulfide-linked. Expressed by the venom gland.

It localises to the secreted. Its function is as follows. Interferes with one step of hemostasis (modulation of platelet aggregation, or coagulation cascade, for example). In Macrovipera lebetinus (Levantine viper), this protein is Snaclec A1.